The primary structure comprises 332 residues: T-cell surface glycoprotein CD1c3 (332 aa).

The N-terminal stretch at 1-17 (MLFLQFLFLDVVLGGSI) is a signal peptide. Residues 18–300 (TKNVVQENIS…IILYWGHGLS (283 aa)) lie on the Extracellular side of the membrane. N-linked (GlcNAc...) asparagine glycans are attached at residues Asn-25, Asn-38, Asn-75, and Asn-146. Cystine bridges form between Cys-120–Cys-184 and Cys-224–Cys-279. An Ig-like domain is found at 205–292 (PEVWLSSSPN…HSSLRDQDII (88 aa)). The chain crosses the membrane as a helical span at residues 301–321 (VILITFAVIVPLVLLIILVLL). Residues 322–332 (CKKCCTYQGIP) lie on the Cytoplasmic side of the membrane.

Heterodimer with B2M (beta-2-microglobulin).

It localises to the cell membrane. Its subcellular location is the endosome membrane. Antigen-presenting protein that binds self and non-self lipid and glycolipid antigens and presents them to T-cell receptors on natural killer T-cells. This chain is T-cell surface glycoprotein CD1c3 (CD1C3), found in Cavia porcellus (Guinea pig).